Here is a 420-residue protein sequence, read N- to C-terminus: Histidine--tRNA ligase (420 aa).

This sequence belongs to the class-II aminoacyl-tRNA synthetase family. As to quaternary structure, homodimer.

Its subcellular location is the cytoplasm. The catalysed reaction is tRNA(His) + L-histidine + ATP = L-histidyl-tRNA(His) + AMP + diphosphate + H(+). The chain is Histidine--tRNA ligase from Desulforudis audaxviator (strain MP104C).